The primary structure comprises 1101 residues: Helicase POLQ-like (1101 aa).

The segment at 212-261 is disordered; the sequence is DLGDHSMKERDWKSSSHNTVNEELPHNCIEQPQQNDESSSKVRTSSDMNR. Residues 213–225 are compositionally biased toward basic and acidic residues; that stretch reads LGDHSMKERDWKS. Positions 241 to 258 are enriched in polar residues; the sequence is EQPQQNDESSSKVRTSSD. Residues 346 to 518 enclose the Helicase ATP-binding domain; it reads LNSVQERKNL…FLQAEYYTSQ (173 aa). Residue 359–366 coordinates ATP; that stretch reads LPTSGGKT. Residues 463-466 carry the DEAH box motif; it reads DELH. In terms of domain architecture, Helicase C-terminal spans 566–758; the sequence is HLVALVTEVI…EFTKGIQTLF (193 aa).

Belongs to the helicase family. SKI2 subfamily. As to quaternary structure, homodimer. Interacts with POLN. Interacts with RAD51B and RAD51C; promoting association with the BCDX2 complex. Interacts with the replication protein A (RPA/RP-A) complex. Interacts with RAD51; stimulating HELQ DNA helicase activity and ability to unwing DNA.

It localises to the nucleus. Its subcellular location is the chromosome. The enzyme catalyses Couples ATP hydrolysis with the unwinding of duplex DNA by translocating in the 3'-5' direction.. It catalyses the reaction ATP + H2O = ADP + phosphate + H(+). With respect to regulation, ATPase activity is strongly stimulated by single-stranded DNA. Presence of ATP and Mg cofactor are required for helicase activity allowing to unwind duplex oligonucleotides up to 60-70-mer. This helicase activity is stimulated by replication protein A (RPA/RP-A) complex that binds to unwound regions and inhibits re-annealing. Single-stranded 3'-5' DNA helicase that plays a key role in homology-driven double-strand break (DSB) repair. Involved in different DSB repair mechanisms that are guided by annealing of extensive stretches of complementary bases at break ends, such as microhomology-mediated end-joining (MMEJ), single-strand annealing (SSA) or synthesis-dependent strand annealing (SDSA). Possesses both DNA unwinding and annealing activities. Forms a complex with RAD51, stimulating HELQ DNA helicase activity and ability to unwing DNA. Efficiently unwinds substrates containing 3' overhangs or a D-loop. In contrast, interaction with the replication protein A (RPA/RP-A) complex inhibits DNA unwinding by HELQ but strongly stimulates DNA strand annealing. Triggers displacement of RPA from single-stranded DNA to facilitate annealing of complementary sequences. The sequence is that of Helicase POLQ-like from Homo sapiens (Human).